Here is a 179-residue protein sequence, read N- to C-terminus: MDIKKIPVGKNPPQDVNVIIEIPLLADPVKYEVDKESGAMFVDRFLHTAMHYPCNYGFVPHTLSDDGDPVDVMVVGRIPVAVGSVMRTRPVGVLYMEDEAGRDEKILGVPHSKLYPYHDNVNNFGDLRPIELRRIEHFFAHYKDLEEGKWVKILGWGNYKEAWDVIERGIAAEAAHKKV.

Substrate is bound by residues Lys-30, Arg-44, and Tyr-56. Mg(2+) is bound by residues Asp-66, Asp-71, and Asp-103. Tyr-142 contributes to the substrate binding site.

This sequence belongs to the PPase family. In terms of assembly, homohexamer. It depends on Mg(2+) as a cofactor.

The protein resides in the cytoplasm. It carries out the reaction diphosphate + H2O = 2 phosphate + H(+). Catalyzes the hydrolysis of inorganic pyrophosphate (PPi) forming two phosphate ions. This is Inorganic pyrophosphatase from Rhodospirillum rubrum (strain ATCC 11170 / ATH 1.1.1 / DSM 467 / LMG 4362 / NCIMB 8255 / S1).